Consider the following 412-residue polypeptide: Probable tRNA sulfurtransferase (412 aa).

A THUMP domain is found at 58–163 (DEVIKQLGYV…SEGTYIYVGK (106 aa)). Residues 181-182 (ML), 206-207 (HF), arginine 265, glycine 287, and glutamine 296 each bind ATP.

Belongs to the ThiI family.

The protein localises to the cytoplasm. The enzyme catalyses [ThiI sulfur-carrier protein]-S-sulfanyl-L-cysteine + a uridine in tRNA + 2 reduced [2Fe-2S]-[ferredoxin] + ATP + H(+) = [ThiI sulfur-carrier protein]-L-cysteine + a 4-thiouridine in tRNA + 2 oxidized [2Fe-2S]-[ferredoxin] + AMP + diphosphate. It carries out the reaction [ThiS sulfur-carrier protein]-C-terminal Gly-Gly-AMP + S-sulfanyl-L-cysteinyl-[cysteine desulfurase] + AH2 = [ThiS sulfur-carrier protein]-C-terminal-Gly-aminoethanethioate + L-cysteinyl-[cysteine desulfurase] + A + AMP + 2 H(+). It functions in the pathway cofactor biosynthesis; thiamine diphosphate biosynthesis. Its function is as follows. Catalyzes the ATP-dependent transfer of a sulfur to tRNA to produce 4-thiouridine in position 8 of tRNAs, which functions as a near-UV photosensor. Also catalyzes the transfer of sulfur to the sulfur carrier protein ThiS, forming ThiS-thiocarboxylate. This is a step in the synthesis of thiazole, in the thiamine biosynthesis pathway. The sulfur is donated as persulfide by IscS. The protein is Probable tRNA sulfurtransferase of Acholeplasma laidlawii (strain PG-8A).